The following is a 456-amino-acid chain: Probable tRNA(Ile)-lysidine synthase (456 aa).

30–35 is an ATP binding site; the sequence is SGGVDS.

It belongs to the tRNA(Ile)-lysidine synthase family.

The protein localises to the cytoplasm. The enzyme catalyses cytidine(34) in tRNA(Ile2) + L-lysine + ATP = lysidine(34) in tRNA(Ile2) + AMP + diphosphate + H(+). Ligates lysine onto the cytidine present at position 34 of the AUA codon-specific tRNA(Ile) that contains the anticodon CAU, in an ATP-dependent manner. Cytidine is converted to lysidine, thus changing the amino acid specificity of the tRNA from methionine to isoleucine. This chain is Probable tRNA(Ile)-lysidine synthase, found in Schizosaccharomyces pombe (strain 972 / ATCC 24843) (Fission yeast).